Reading from the N-terminus, the 129-residue chain is Small ribosomal subunit protein uS11 (129 aa).

It belongs to the universal ribosomal protein uS11 family. As to quaternary structure, part of the 30S ribosomal subunit. Interacts with proteins S7 and S18. Binds to IF-3.

Located on the platform of the 30S subunit, it bridges several disparate RNA helices of the 16S rRNA. Forms part of the Shine-Dalgarno cleft in the 70S ribosome. The sequence is that of Small ribosomal subunit protein uS11 from Azotobacter vinelandii (strain DJ / ATCC BAA-1303).